Reading from the N-terminus, the 985-residue chain is Pro-apoptotic serine protease NMA111 (985 aa).

The interval 79–269 (VVSIHFSQVA…LPLDRVVRAL (191 aa)) is serine protease. Residues H117, D148, and S231 each act as charge relay system in the active site. 2 consecutive PDZ domains span residues 287 to 385 (WVLK…TVGD) and 771 to 847 (PEEW…VRDA).

Belongs to the peptidase S1C family.

The protein resides in the nucleus. Its function is as follows. Nuclear serine protease which mediates apoptosis. In Kluyveromyces lactis (strain ATCC 8585 / CBS 2359 / DSM 70799 / NBRC 1267 / NRRL Y-1140 / WM37) (Yeast), this protein is Pro-apoptotic serine protease NMA111 (NMA111).